A 387-amino-acid chain; its full sequence is MYEPKPEHRFTFGLWTVGNVGRDPFGDAVRERLDPVYVVHKLAELGAYGVNLHDEDLIPRGTPPQERDQIVRRFKKALDETGLKVPMVTANLFSDPAFKDGAFTSPDPWVRAYALRKSLETMDLGAELGAEIYVVWPGREGAEVEATGKARKVWDWVREALNFMAAYAEDQGYGYRFALEPKPNEPRGDIYFATVGSMLAFIHTLDRPERFGLNPEFAHETMAGLNFVHAVAQALDAGKLFHIDLNDQRMSRFDQDLRFGSENLKAAFFLVDLLESSGYQGPRHFDAHALRTEDEEGVWAFARGCMRTYLILKERAEAFREDPEVKELLAAYYQEDPAALALLGPYSREKAEALKRAELPLEAKRRRGYALERLDQLAVEYLLGVRG.

Catalysis depends on residues His-53 and Asp-56. The Mg(2+) site is built by Glu-180, Glu-216, His-219, Asp-244, Asp-254, Asp-256, and Asp-286.

It belongs to the xylose isomerase family. As to quaternary structure, homotetramer. Mg(2+) serves as cofactor.

It localises to the cytoplasm. The catalysed reaction is alpha-D-xylose = alpha-D-xylulofuranose. This is Xylose isomerase (xylA) from Thermus thermophilus (strain ATCC 27634 / DSM 579 / HB8).